The following is a 142-amino-acid chain: DNA-directed RNA polymerases I, II, and III subunit rpabc3 (142 aa).

The interval 16–40 is non-specific ssDNA binding; the sequence is DPDGKKFDRVSRFVCYSENYEMDLQ.

It belongs to the eukaryotic RPB8 RNA polymerase subunit family. As to quaternary structure, component of the RNA polymerase I (Pol I), RNA polymerase II (Pol II) and RNA polymerase III (Pol III) complexes consisting of at least 13, 12 and 17 subunits, respectively. Directly interacts with POLR2A.

The protein resides in the nucleus. The protein localises to the nucleolus. DNA-dependent RNA polymerase catalyzes the transcription of DNA into RNA using the four ribonucleoside triphosphates as substrates. Common component of RNA polymerases I, II and III which synthesize ribosomal RNA precursors, mRNA precursors and many functional non-coding RNAs, and small RNAs, such as 5S rRNA and tRNAs, respectively. The polypeptide is DNA-directed RNA polymerases I, II, and III subunit rpabc3 (polr2h) (Dictyostelium discoideum (Social amoeba)).